The chain runs to 115 residues: Ig kappa chain V region 3315 (115 aa).

The tract at residues 1-24 (AQIVMTQTPSSVSAAVGGTVTINC) is framework-1. Positions 25 to 37 (QSSQSVYENGRLS) are complementarity-determining-1. A framework-2 region spans residues 38-52 (WFQQKPGQPPKRLIY). Residues 53–59 (RASTLAS) form a complementarity-determining-2 region. A framework-3 region spans residues 60-91 (GVSSRFTGSGSGTQFTLSISDVQCDDAATYYC). The complementarity-determining-3 stretch occupies residues 92–104 (LGNYDCSSGDSFT). Residues 105–114 (FGGGTEVVVK) are framework-4.

The sequence is that of Ig kappa chain V region 3315 from Oryctolagus cuniculus (Rabbit).